Here is a 160-residue protein sequence, read N- to C-terminus: MAKKPKVPSNTIALNKRARHEYFIEDEIEAGLALQGWEVKSLRAGKANIGDSYVTFRHGEAFLFGATITPLNMASTHIVADPTRTRKLLLNQRELDSLFGKVNRDGMTVVALSLYWKNAWAKVKIGLAKGKKLHDKREDIKDREWHVTKQRIMKNAGRGS.

The protein belongs to the SmpB family.

The protein localises to the cytoplasm. Required for rescue of stalled ribosomes mediated by trans-translation. Binds to transfer-messenger RNA (tmRNA), required for stable association of tmRNA with ribosomes. tmRNA and SmpB together mimic tRNA shape, replacing the anticodon stem-loop with SmpB. tmRNA is encoded by the ssrA gene; the 2 termini fold to resemble tRNA(Ala) and it encodes a 'tag peptide', a short internal open reading frame. During trans-translation Ala-aminoacylated tmRNA acts like a tRNA, entering the A-site of stalled ribosomes, displacing the stalled mRNA. The ribosome then switches to translate the ORF on the tmRNA; the nascent peptide is terminated with the 'tag peptide' encoded by the tmRNA and targeted for degradation. The ribosome is freed to recommence translation, which seems to be the essential function of trans-translation. In Haemophilus ducreyi (strain 35000HP / ATCC 700724), this protein is SsrA-binding protein.